A 444-amino-acid chain; its full sequence is Acyl-CoA 6-desaturase (444 aa).

Topologically, residues 1–131 are cytoplasmic; that stretch reads MGKGGNQGEG…DMNLFKTNHV (131 aa). Residues 18–95 form the Cytochrome b5 heme-binding domain; sequence VPTFSWEEIQ…LKPLLIGELA (78 aa). The helical transmembrane segment at 132-152 threads the bilayer; the sequence is FFLLLLAHIIALESIAWFTVF. The Lumenal segment spans residues 153–157; the sequence is YFGNG. The helical transmembrane segment at 158–178 threads the bilayer; that stretch reads WIPTLITAFVLATSQAQAGWL. Topologically, residues 179 to 264 are cytoplasmic; sequence QHDYGHLSVY…KYLPYNHQHE (86 aa). A Histidine box-1 motif is present at residues 180-184; the sequence is HDYGH. The Histidine box-2 signature appears at 217-221; sequence HFQHH. Residues 265–285 traverse the membrane as a helical segment; sequence YFFLIGPPLLIPMYFQYQIIM. The Lumenal segment spans residues 286–305; the sequence is TMIVHKNWVDLAWAVSYYIR. A helical transmembrane segment spans residues 306–326; sequence FFITYIPFYGILGALLFLNFI. Topologically, residues 327–444 are cytoplasmic; it reads RFLESHWFVW…KLWLDAYLHK (118 aa). Positions 382-386 match the Histidine box-3 motif; the sequence is QIEHH.

This sequence belongs to the fatty acid desaturase type 1 family. Expressed in a wide array of tissues, highest expression is found in liver followed by brain, lung, heart, and retina. A lower level is found in breast tumor when compared with normal tissues; lowest levels were found in patients with poor prognostic index.

It localises to the endoplasmic reticulum membrane. The catalysed reaction is (9Z,12Z)-octadecadienoyl-CoA + 2 Fe(II)-[cytochrome b5] + O2 + 2 H(+) = (6Z,9Z,12Z)-octadecatrienoyl-CoA + 2 Fe(III)-[cytochrome b5] + 2 H2O. The enzyme catalyses (9Z,12Z,15Z)-octadecatrienoyl-CoA + 2 Fe(II)-[cytochrome b5] + O2 + 2 H(+) = (6Z,9Z,12Z,15Z)-octadecatetraenoyl-CoA + 2 Fe(III)-[cytochrome b5] + 2 H2O. It carries out the reaction hexadecanoyl-CoA + 2 Fe(II)-[cytochrome b5] + O2 + 2 H(+) = (6Z)-hexadecenoyl-CoA + 2 Fe(III)-[cytochrome b5] + 2 H2O. It catalyses the reaction (9Z,12Z,15Z,18Z,21Z)-tetracosapentaenoyl-CoA + 2 Fe(II)-[cytochrome b5] + O2 + 2 H(+) = (6Z,9Z,12Z,15Z,18Z,21Z)-tetracosahexaenoyl-CoA + 2 Fe(III)-[cytochrome b5] + 2 H2O. The catalysed reaction is (11E)-octadecenoyl-CoA + 2 Fe(II)-[cytochrome b5] + O2 + 2 H(+) = (6Z,11E)-octadecadienoyl-CoA + 2 Fe(III)-[cytochrome b5] + 2 H2O. The enzyme catalyses (11Z,14Z)-eicosadienoyl-CoA + 2 Fe(II)-[cytochrome b5] + O2 + 2 H(+) = (8Z,11Z,14Z)-eicosatrienoyl-CoA + 2 Fe(III)-[cytochrome b5] + 2 H2O. It carries out the reaction (11Z,14Z,17Z)-eicosatrienoyl-CoA + 2 Fe(II)-[cytochrome b5] + O2 + 2 H(+) = (8Z,11Z,14Z,17Z)-eicosatetraenoyl-CoA + 2 Fe(III)-[cytochrome b5] + 2 H2O. It functions in the pathway lipid metabolism; polyunsaturated fatty acid biosynthesis. In terms of biological role, involved in the biosynthesis of highly unsaturated fatty acids (HUFA) from the essential polyunsaturated fatty acids (PUFA) linoleic acid (LA) (18:2n-6) and alpha-linolenic acid (ALA) (18:3n-3) precursors, acting as a fatty acyl-coenzyme A (CoA) desaturase that introduces a cis double bond at carbon 6 of the fatty acyl chain. Catalyzes the first and rate limiting step in this pathway which is the desaturation of LA (18:2n-6) and ALA (18:3n-3) into gamma-linoleate (GLA) (18:3n-6) and stearidonate (18:4n-3), respectively. Subsequently, in the biosynthetic pathway of HUFA n-3 series, it desaturates tetracosapentaenoate (24:5n-3) to tetracosahexaenoate (24:6n-3), which is then converted to docosahexaenoate (DHA)(22:6n-3), an important lipid for nervous system function. Desaturates hexadecanate (palmitate) to produce 6Z-hexadecenoate (sapienate), a fatty acid unique to humans and major component of human sebum, that has been implicated in the development of acne and may have potent antibacterial activity. It can also desaturate (11E)-octadecenoate (trans-vaccenoate, the predominant trans fatty acid in human milk) at carbon 6 generating (6Z,11E)-octadecadienoate. In addition to Delta-6 activity, this enzyme exhibits Delta-8 activity with slight biases toward n-3 fatty acyl-CoA substrates. The sequence is that of Acyl-CoA 6-desaturase from Homo sapiens (Human).